The primary structure comprises 452 residues: tRNA modification GTPase MnmE (452 aa).

(6S)-5-formyl-5,6,7,8-tetrahydrofolate contacts are provided by arginine 23, glutamate 81, and lysine 120. Residues 217 to 373 (GIKTAIIGQT…LVLRINQMYL (157 aa)) enclose the TrmE-type G domain. Asparagine 227 serves as a coordination point for K(+). Residues 227 to 232 (NVGKSS), 246 to 252 (TDIPGTT), and 271 to 274 (DTAG) contribute to the GTP site. Serine 231 contacts Mg(2+). K(+) is bound by residues threonine 246, isoleucine 248, and threonine 251. Threonine 252 provides a ligand contact to Mg(2+). (6S)-5-formyl-5,6,7,8-tetrahydrofolate is bound at residue lysine 452.

The protein belongs to the TRAFAC class TrmE-Era-EngA-EngB-Septin-like GTPase superfamily. TrmE GTPase family. As to quaternary structure, homodimer. Heterotetramer of two MnmE and two MnmG subunits. The cofactor is K(+).

The protein localises to the cytoplasm. Functionally, exhibits a very high intrinsic GTPase hydrolysis rate. Involved in the addition of a carboxymethylaminomethyl (cmnm) group at the wobble position (U34) of certain tRNAs, forming tRNA-cmnm(5)s(2)U34. In Mycoplasma mycoides subsp. mycoides SC (strain CCUG 32753 / NCTC 10114 / PG1), this protein is tRNA modification GTPase MnmE.